We begin with the raw amino-acid sequence, 104 residues long: Large ribosomal subunit protein bL21 (104 aa).

The protein belongs to the bacterial ribosomal protein bL21 family. In terms of assembly, part of the 50S ribosomal subunit. Contacts protein L20.

This protein binds to 23S rRNA in the presence of protein L20. The protein is Large ribosomal subunit protein bL21 of Helicobacter pylori (strain Shi470).